Consider the following 181-residue polypeptide: Iron sulfur cluster assembly protein 1, mitochondrial (181 aa).

The interval 159-181 (RKTKNPTLGAEAAETPAAATATA) is disordered. A compositionally biased stretch (low complexity) spans 168-181 (AEAAETPAAATATA).

It belongs to the NifU family. Component of the core Fe-S cluster (ISC) assembly machinery. Requires [2Fe-2S] cluster as cofactor.

The protein localises to the mitochondrion matrix. It participates in cofactor biosynthesis; iron-sulfur cluster biosynthesis. Scaffold protein for the de novo synthesis of iron-sulfur (Fe-S) clusters within mitochondria, which is required for maturation of both mitochondrial and cytoplasmic [2Fe-2S] and [4Fe-4S] proteins. First, a [2Fe-2S] cluster is transiently assembled on the scaffold protein ISU1. In a second step, the cluster is released from ISU1, transferred to a glutaredoxin, followed by the formation of mitochondrial [2Fe-2S] proteins, the synthesis of [4Fe-4S] clusters and their target-specific insertion into the recipient apoproteins. Cluster assembly on ISU1 depends on the function of the cysteine desulfurase complex NFS1-ISD11, which serves as the sulfur donor for cluster synthesis, the iron-binding protein frataxin as the putative iron donor, and the electron transfer chain comprised of ferredoxin reductase and ferredoxin, which receive their electrons from NADH. The sequence is that of Iron sulfur cluster assembly protein 1, mitochondrial (ISU1) from Yarrowia lipolytica (strain CLIB 122 / E 150) (Yeast).